A 102-amino-acid chain; its full sequence is Small ribosomal subunit protein bS6 (102 aa).

It belongs to the bacterial ribosomal protein bS6 family.

Binds together with bS18 to 16S ribosomal RNA. The sequence is that of Small ribosomal subunit protein bS6 from Deinococcus deserti (strain DSM 17065 / CIP 109153 / LMG 22923 / VCD115).